A 96-amino-acid chain; its full sequence is MEKNKHCFYVVECSDGSYYAGYTNHIEKRIGTHNSGRGAKYTRARLPVVLKYVEFHEDKRTAMQAEYYFKQLNRKQKEEYMQKGERYVATKKLSTK.

A GIY-YIG domain is found at 4–79 (NKHCFYVVEC…KQLNRKQKEE (76 aa)).

This sequence belongs to the UPF0213 family.

This chain is UPF0213 protein BCE33L0031, found in Bacillus cereus (strain ZK / E33L).